We begin with the raw amino-acid sequence, 1851 residues long: Chitin synthase (1851 aa).

Positions 1–21 (MQYHQHQHQFPGPGPSHTSVY) are disordered. The Cytoplasmic portion of the chain corresponds to 1-108 (MQYHQHQHQF…KDTLYNGFLQ (108 aa)). Residues 109–129 (VLKMITFVALFVTTLGSSILA) traverse the membrane as a helical segment. The Extracellular segment spans residues 130–168 (KLSLLVMAAGLGQAGHNISICPDKIPESPKNSVLISPKN). Asparagine 146 is a glycosylation site (N-linked (GlcNAc...) asparagine). A helical transmembrane segment spans residues 169–189 (AAKWAWALLLAICIPELLCFA). Residues 190–208 (RSLHRSLFRKVRGPSFLQF) are Cytoplasmic-facing. A helical transmembrane segment spans residues 209 to 229 (LLVFTVESVHAFGLGALVFAI). Over 230-234 (MPRGM) the chain is Extracellular. Residues 235 to 255 (VITMLQLGNSLCLIPSLLLPL) form a helical membrane-spanning segment. Residues 256 to 261 (SRSRSR) are Cytoplasmic-facing. Residues 262 to 282 (WLPLLLLLDGSAILAQSSAAI) traverse the membrane as a helical segment. Residues 283–291 (WRGSIPLER) are Extracellular-facing. Residues 292 to 312 (FGFVFLCTSLISIAWWQNFVH) form a helical membrane-spanning segment. At 313 to 337 (PHSFLPATRFFAHYAAKLRECRSKT) the chain is on the cytoplasmic side. A helical transmembrane segment spans residues 338–358 (FVVLSPWKCLIFTFCMFQFVP). Residues 359–544 (PQIPFRELLQ…ELNQFTTAND (186 aa)) lie on the Extracellular side of the membrane. N-linked (GlcNAc...) asparagine glycans are attached at residues asparagine 385 and asparagine 435. Residues 432–522 (LFRNGTRRPP…DADEQEEEEE (91 aa)) form a disordered region. The span at 442–454 (KKEEVKKNKMDSK) shows a compositional bias: basic and acidic residues. The segment covering 455-465 (KKTKKLKKKKG) has biased composition (basic residues). The segment covering 466-478 (GNNNATSTNSSEK) has biased composition (low complexity). N-linked (GlcNAc...) asparagine glycosylation is found at asparagine 469 and asparagine 474. A compositionally biased stretch (acidic residues) spans 513–522 (DADEQEEEEE). A helical membrane pass occupies residues 545–565 (ALWLVFVQAGSVLLCQLCAKF). Topologically, residues 566–573 (ACKVVMQR) are cytoplasmic. The helical transmembrane segment at 574–594 (VGLALPVVLSIPFGILFLAYS) threads the bilayer. Residues 595–631 (CRQKATNPCHLSEWMSKELFWQCPTRPFHWQRFFREQ) lie on the Extracellular side of the membrane. A helical transmembrane segment spans residues 632-652 (PNLLWLCWWLSQCWITIHLWL). Residues 653 to 1124 (PRQERLAKSE…VSIWYIAYQL (472 aa)) lie on the Cytoplasmic side of the membrane. The interval 693-718 (SEDIDTEEEANEGGGEQEDGNSSTHT) is disordered. A compositionally biased stretch (acidic residues) spans 696 to 711 (IDTEEEANEGGGEQED). A helical transmembrane segment spans residues 1125 to 1145 (VMLFSSVLGPGTIFLMIVGAI). Residues 1146–1154 (SISFNIDTR) are Extracellular-facing. Residues 1155 to 1175 (LALLIVTTPVLCFCVCCLTCG) traverse the membrane as a helical segment. Over 1176 to 1179 (TETQ) the chain is Cytoplasmic. The helical transmembrane segment at 1180-1200 (LLLAQVIGALFAMLMTAVIVG) threads the bilayer. At 1201-1209 (TSLQIQKDG) the chain is on the extracellular side. Residues 1210–1230 (LLSPHSIFLFTVLGSWSFSAL) traverse the membrane as a helical segment. Topologically, residues 1231–1235 (LHPLE) are cytoplasmic. The helical transmembrane segment at 1236 to 1256 (FGCLLPCGLYFLAIPCMYMLL) threads the bilayer. Topologically, residues 1257–1461 (PVYSLCNLNT…QRGLNELRNT (205 aa)) are extracellular. Asparagine 1274 is a glycosylation site (N-linked (GlcNAc...) asparagine). Positions 1329 to 1383 (CADETVEVRKLDENFRKIERKLQSLERRTNGQGNNAEEEGKEEEETGKSEQERKE) form a coiled coil. Residues 1350 to 1402 (LQSLERRTNGQGNNAEEEGKEEEETGKSEQERKEGREEGKEEEGKMSKRKKEE) are disordered. Residues 1364 to 1373 (AEEEGKEEEE) are compositionally biased toward acidic residues. Residues 1374–1402 (TGKSEQERKEGREEGKEEEGKMSKRKKEE) are compositionally biased toward basic and acidic residues. A helical membrane pass occupies residues 1462 to 1482 (CCSAFFMVNIVFIIVVLVLQL). Topologically, residues 1483–1527 (QKDCLHIEWPLGPLVNQTRVQCGGGGGRDFEGEEWIMSRLQLEPM) are cytoplasmic. A helical transmembrane segment spans residues 1528 to 1548 (GFVFIVFFLIILFIQFLAMLF). Topologically, residues 1549-1851 (HRFGTFTHII…FLGTTNKRAK (303 aa)) are extracellular. The segment at 1626–1658 (GKRQQNAQIPPRCEKGGNERGEESPTSLPAPPV) is disordered. Residues 1637-1648 (RCEKGGNERGEE) are compositionally biased toward basic and acidic residues. Asparagine 1660 is a glycosylation site (N-linked (GlcNAc...) asparagine). The disordered stretch occupies residues 1765–1851 (HSIFPSSSES…FLGTTNKRAK (87 aa)). A compositionally biased stretch (basic and acidic residues) spans 1781-1822 (GGGRGRGREQERDKCLEGKKEKFRQRVEEGPARCHRLEELFG). Basic residues predominate over residues 1823–1834 (KSRKGGPQKRGK).

Belongs to the chitin synthase family. Class IV subfamily. May require proteolytic cleavage for activation.

The protein resides in the cell membrane. The enzyme catalyses [(1-&gt;4)-N-acetyl-beta-D-glucosaminyl](n) + UDP-N-acetyl-alpha-D-glucosamine = [(1-&gt;4)-N-acetyl-beta-D-glucosaminyl](n+1) + UDP + H(+). In terms of biological role, required for the synthesis of chitin. This is Chitin synthase from Meloidogyne artiellia (British root-knot nematode).